Reading from the N-terminus, the 391-residue chain is Extracellular metalloproteinase 3 (391 aa).

Positions 1-9 (HNVVDYVAS) are excised as a propeptide. A glycan (N-linked (GlcNAc...) asparagine) is linked at Asn-173. Residue His-192 participates in Zn(2+) binding. The active site involves Glu-193. Position 196 (His-196) interacts with Zn(2+). Asn-243 and Asn-385 each carry an N-linked (GlcNAc...) asparagine glycan.

It belongs to the peptidase M36 family. It depends on Zn(2+) as a cofactor.

The protein localises to the secreted. Secreted metalloproteinase probably acting as a virulence factor. In Trichophyton soudanense, this protein is Extracellular metalloproteinase 3 (MEP3).